The chain runs to 1595 residues: Pentafunctional AROM polypeptide (1595 aa).

Residues 1–384 (MGVPTKISIL…HEPRASTVSN (384 aa)) are 3-dehydroquinate synthase. NAD(+)-binding positions include 44 to 46 (DTN), 81 to 84 (ESSK), 114 to 116 (GGV), and aspartate 119. Arginine 130 lines the 7-phospho-2-dehydro-3-deoxy-D-arabino-heptonate pocket. 139 to 140 (TT) provides a ligand contact to NAD(+). 7-phospho-2-dehydro-3-deoxy-D-arabino-heptonate is bound by residues aspartate 146 and lysine 152. Lysine 161 contacts NAD(+). A 7-phospho-2-dehydro-3-deoxy-D-arabino-heptonate-binding site is contributed by asparagine 162. NAD(+) contacts are provided by residues 179–182 (FLNT) and asparagine 190. Residue glutamate 194 participates in Zn(2+) binding. Residues 194 to 197 (EVIK) and lysine 250 each bind 7-phospho-2-dehydro-3-deoxy-D-arabino-heptonate. Residue glutamate 260 is the Proton acceptor; for 3-dehydroquinate synthase activity of the active site. 7-phospho-2-dehydro-3-deoxy-D-arabino-heptonate-binding positions include 264 to 268 (RNLLN) and histidine 271. Histidine 271 serves as a coordination point for Zn(2+). Histidine 275 (proton acceptor; for 3-dehydroquinate synthase activity) is an active-site residue. Residues histidine 287 and lysine 356 each coordinate 7-phospho-2-dehydro-3-deoxy-D-arabino-heptonate. Position 287 (histidine 287) interacts with Zn(2+). Residues 397–842 (VSPGVPKGLD…WDSLAQTFKV (446 aa)) are EPSP synthase. The For EPSP synthase activity role is filled by cysteine 824. Residues 866–1057 (ASIFIIGMRG…RRKENTFFVS (192 aa)) form a shikimate kinase region. 872 to 879 (GMRGAGKT) is an ATP binding site. The segment at 1058–1278 (LTLPDLSLAA…AAPGQLSARE (221 aa)) is 3-dehydroquinase. Histidine 1181 functions as the Proton acceptor; for 3-dehydroquinate dehydratase activity in the catalytic mechanism. Lysine 1209 (schiff-base intermediate with substrate; for 3-dehydroquinate dehydratase activity) is an active-site residue. The interval 1291-1595 (AKKFAVIGNP…MGVSPSEDIL (305 aa)) is shikimate dehydrogenase.

It in the N-terminal section; belongs to the sugar phosphate cyclases superfamily. Dehydroquinate synthase family. The protein in the 2nd section; belongs to the EPSP synthase family. In the 3rd section; belongs to the shikimate kinase family. This sequence in the 4th section; belongs to the type-I 3-dehydroquinase family. It in the C-terminal section; belongs to the shikimate dehydrogenase family. In terms of assembly, homodimer. Requires Zn(2+) as cofactor.

The protein localises to the cytoplasm. The catalysed reaction is 7-phospho-2-dehydro-3-deoxy-D-arabino-heptonate = 3-dehydroquinate + phosphate. It carries out the reaction 3-dehydroquinate = 3-dehydroshikimate + H2O. The enzyme catalyses shikimate + NADP(+) = 3-dehydroshikimate + NADPH + H(+). It catalyses the reaction shikimate + ATP = 3-phosphoshikimate + ADP + H(+). The catalysed reaction is 3-phosphoshikimate + phosphoenolpyruvate = 5-O-(1-carboxyvinyl)-3-phosphoshikimate + phosphate. It functions in the pathway metabolic intermediate biosynthesis; chorismate biosynthesis; chorismate from D-erythrose 4-phosphate and phosphoenolpyruvate: step 2/7. It participates in metabolic intermediate biosynthesis; chorismate biosynthesis; chorismate from D-erythrose 4-phosphate and phosphoenolpyruvate: step 3/7. The protein operates within metabolic intermediate biosynthesis; chorismate biosynthesis; chorismate from D-erythrose 4-phosphate and phosphoenolpyruvate: step 4/7. Its pathway is metabolic intermediate biosynthesis; chorismate biosynthesis; chorismate from D-erythrose 4-phosphate and phosphoenolpyruvate: step 5/7. It functions in the pathway metabolic intermediate biosynthesis; chorismate biosynthesis; chorismate from D-erythrose 4-phosphate and phosphoenolpyruvate: step 6/7. Functionally, the AROM polypeptide catalyzes 5 consecutive enzymatic reactions in prechorismate polyaromatic amino acid biosynthesis. The chain is Pentafunctional AROM polypeptide from Ajellomyces capsulatus (strain G186AR / H82 / ATCC MYA-2454 / RMSCC 2432) (Darling's disease fungus).